Consider the following 190-residue polypeptide: Lipocalin Can f 6.0101 (190 aa).

The signal sequence occupies residues 1-15 (MKLLLLCLGLILVHA). The interval 43–54 (SDIKEKIEENGS) is igE-binding. N-linked (GlcNAc...) asparagine glycans are attached at residues Asn52 and Asn67. Residues 76–83 (TKVNGKCT) form an igE-binding region. Residues Cys82 and Cys175 are joined by a disulfide bond. Asn90 carries N-linked (GlcNAc...) asparagine glycosylation. An igE-binding region spans residues 91–97 (KTEKDGE). The interval 100-109 (VVHDGYNLFR) is no IgE-binding. 2 igE-binding regions span residues 125-132 (NVNQEQEF) and 139-152 (GRKP…KEKF).

The protein belongs to the calycin superfamily. Lipocalin family. As to quaternary structure, monomer. As to expression, expressed in saliva (at protein level). Expressed in dander (at protein level). According to PubMed:22104604, expressed in submaxillary gland. In contrast, according to PubMed:22515174, not expressed in submaxillary gland. Expressed in bladder and skin, but not in tongue.

It localises to the secreted. The protein is Lipocalin Can f 6.0101 of Canis lupus familiaris (Dog).